A 297-amino-acid chain; its full sequence is Aspartate carbamoyltransferase catalytic subunit (297 aa).

Carbamoyl phosphate is bound by residues Arg-49 and Thr-50. Lys-77 lines the L-aspartate pocket. Arg-99, His-129, and Gln-132 together coordinate carbamoyl phosphate. L-aspartate contacts are provided by Arg-162 and Arg-215. Residues Gly-256 and Pro-257 each coordinate carbamoyl phosphate.

The protein belongs to the aspartate/ornithine carbamoyltransferase superfamily. ATCase family. Heterododecamer (2C3:3R2) of six catalytic PyrB chains organized as two trimers (C3), and six regulatory PyrI chains organized as three dimers (R2).

The catalysed reaction is carbamoyl phosphate + L-aspartate = N-carbamoyl-L-aspartate + phosphate + H(+). It functions in the pathway pyrimidine metabolism; UMP biosynthesis via de novo pathway; (S)-dihydroorotate from bicarbonate: step 2/3. Its function is as follows. Catalyzes the condensation of carbamoyl phosphate and aspartate to form carbamoyl aspartate and inorganic phosphate, the committed step in the de novo pyrimidine nucleotide biosynthesis pathway. The chain is Aspartate carbamoyltransferase catalytic subunit from Legionella pneumophila (strain Lens).